We begin with the raw amino-acid sequence, 505 residues long: Alpha-1-syntrophin (505 aa).

Disordered regions lie at residues 1–25 (MASGRRAPRTGLLELRAGAGSGAGG) and 40–77 (LTVSPADGDPGPEPGAPREQEPAQLNGAAEPGAGPPQL). PH domains follow at residues 6 to 269 (RAPR…AQVN) and 293 to 401 (DIKQ…DGCH). In terms of domain architecture, PDZ spans 87–170 (RVTVRKADAG…EVVLEVKYMK (84 aa)). Phosphoserine is present on residues S101, S184, S189, S193, and S200. Positions 180 to 210 (TGGTSVGWDSPPASPLQRQPSSPGPTPRNFS) are disordered. Positions 449-505 (PFEKLQMSSDDGASLLFLDFGGAEGEIQLDLHSCPKTIVFIIHSFLSAKVTRLGLLA) constitute an SU domain. The interval 483–505 (PKTIVFIIHSFLSAKVTRLGLLA) is calmodulin-binding.

The protein belongs to the syntrophin family. As to quaternary structure, monomer and homodimer. Interacts with the other members of the syntrophin family SNTB1 and SNTB2; SGCG and SGCA of the dystrophin glycoprotein complex; NOS1; GRB2; the sodium channel proteins SCN4A and SCN5A; F-actin and calmodulin. Interacts with dystrophin protein DMD and related proteins DTNA and UTRN and with MAPK12, TGFA and GA. Interacts with MYOC; regulates muscle hypertrophy. Interacts with DTNB. Post-translationally, phosphorylated by CaM-kinase II. Phosphorylation may inhibit the interaction with DMD. In terms of tissue distribution, high expression in skeletal muscle and heart. Low expression in brain, pancreas, liver, kidney and lung. Not detected in placenta.

The protein localises to the cell membrane. The protein resides in the sarcolemma. Its subcellular location is the cell junction. It localises to the cytoplasm. It is found in the cytoskeleton. Functionally, adapter protein that binds to and probably organizes the subcellular localization of a variety of membrane proteins. May link various receptors to the actin cytoskeleton and the extracellular matrix via the dystrophin glycoprotein complex. Plays an important role in synapse formation and in the organization of UTRN and acetylcholine receptors at the neuromuscular synapse. Binds to phosphatidylinositol 4,5-bisphosphate. The sequence is that of Alpha-1-syntrophin (SNTA1) from Homo sapiens (Human).